We begin with the raw amino-acid sequence, 218 residues long: Glutathione S-transferase Mu 1 (218 aa).

The region spanning 2-88 is the GST N-terminal domain; sequence PMILGYWNVR…YLARKHHLDG (87 aa). 7–8 is a binding site for glutathione; it reads YW. Phosphothreonine is present on T34. Glutathione contacts are provided by residues 43 to 46, K50, and 59 to 60; these read RSQW and NL. S67 is subject to Phosphoserine. 72–73 serves as a coordination point for glutathione; it reads QS. Residues 90-208 enclose the GST C-terminal domain; that stretch reads TEEERIRADI…KSSRYIATPI (119 aa). Y116 serves as a coordination point for substrate. S210 bears the Phosphoserine mark.

In terms of assembly, homodimer.

The protein resides in the cytoplasm. It carries out the reaction RX + glutathione = an S-substituted glutathione + a halide anion + H(+). The enzyme catalyses prostaglandin A2 + glutathione = prostaglandin A2-S-(R)-glutathione. The catalysed reaction is prostaglandin J2 + glutathione = prostaglandin J2-S-(R)-glutathione. It catalyses the reaction prostaglandin J2 + glutathione = prostaglandin J2-S-(S)-glutathione. It carries out the reaction prostaglandin A2 + glutathione = prostaglandin A2-S-(S)-glutathione. The enzyme catalyses 11(S)-hydroxy-14(S),15(S)-epoxy-(5Z,8Z,12E)-eicosatrienoate + glutathione = (11S,15S)-dihydroxy-14(R)-S-glutathionyl-(5Z,8Z,12E)-eicosatrienoate. Its function is as follows. Conjugation of reduced glutathione to a wide number of exogenous and endogenous hydrophobic electrophiles. Involved in the formation of glutathione conjugates of both prostaglandin A2 (PGA2) and prostaglandin J2 (PGJ2). Participates in the formation of novel hepoxilin regioisomers. This is Glutathione S-transferase Mu 1 from Mus musculus (Mouse).